A 154-amino-acid polypeptide reads, in one-letter code: Prefoldin subunit 2 (154 aa).

2 disordered regions span residues 1-20 (MADS…GKGA) and 126-154 (LMGE…VLVS). A compositionally biased stretch (gly residues) spans 9–18 (GKSGGSGAGK). The span at 126-139 (LMGEDEKPAAKENS) shows a compositional bias: basic and acidic residues. Residues 140–154 (EGAGAKASSAGVLVS) are compositionally biased toward low complexity.

This sequence belongs to the prefoldin subunit beta family. Heterohexamer of two PFD-alpha type and four PFD-beta type subunits. Component of the PAQosome complex which is responsible for the biogenesis of several protein complexes and which consists of R2TP complex members RUVBL1, RUVBL2, RPAP3 and PIH1D1, URI complex members PFDN2, PFDN6, PDRG1, UXT and URI1 as well as ASDURF, POLR2E and DNAAF10/WDR92. Interacts with URI1; the interaction is phosphorylation-dependent and occurs in a growth-dependent manner.

Its subcellular location is the nucleus. It localises to the cytoplasm. The protein localises to the mitochondrion. Functionally, binds specifically to cytosolic chaperonin (c-CPN) and transfers target proteins to it. Binds to nascent polypeptide chain and promotes folding in an environment in which there are many competing pathways for nonnative proteins. The polypeptide is Prefoldin subunit 2 (Pfdn2) (Mus musculus (Mouse)).